Consider the following 513-residue polypeptide: Zinc finger CCCH-type with G patch domain-containing protein (513 aa).

A C3H1-type zinc finger spans residues 155 to 178; sequence PCSYYLEGECRFDEAKCRFSHGAL. Composition is skewed to acidic residues over residues 252–261 and 273–283; these read DQDEDDELSS and SDEAESDMDDL. The disordered stretch occupies residues 252-283; the sequence is DQDEDDELSSEESTSSMRDASSDEAESDMDDL. Residues 312-358 enclose the G-patch domain; the sequence is TRGIGSKLMEKMGYIHGTGLGSEGRGIVTPVSAQILPQGRSLDACME. Disordered regions lie at residues 411–430 and 477–513; these read PGES…NNEL and QVQM…MFEF. Over residues 477-495 the composition is skewed to polar residues; it reads QVQMQSHKQELATLQAQER. The segment covering 496–513 has biased composition (basic and acidic residues); it reads SLSKEQQTRKSKNKMFEF.

It localises to the nucleus. In terms of biological role, transcription repressor. In Drosophila sechellia (Fruit fly), this protein is Zinc finger CCCH-type with G patch domain-containing protein.